The chain runs to 165 residues: SsrA-binding protein (165 aa).

The segment at 141-165 (KLHDKRQEEKRKQADREVKSALARY) is disordered. The segment covering 145 to 159 (KRQEEKRKQADREVK) has biased composition (basic and acidic residues).

The protein belongs to the SmpB family.

The protein resides in the cytoplasm. Required for rescue of stalled ribosomes mediated by trans-translation. Binds to transfer-messenger RNA (tmRNA), required for stable association of tmRNA with ribosomes. tmRNA and SmpB together mimic tRNA shape, replacing the anticodon stem-loop with SmpB. tmRNA is encoded by the ssrA gene; the 2 termini fold to resemble tRNA(Ala) and it encodes a 'tag peptide', a short internal open reading frame. During trans-translation Ala-aminoacylated tmRNA acts like a tRNA, entering the A-site of stalled ribosomes, displacing the stalled mRNA. The ribosome then switches to translate the ORF on the tmRNA; the nascent peptide is terminated with the 'tag peptide' encoded by the tmRNA and targeted for degradation. The ribosome is freed to recommence translation, which seems to be the essential function of trans-translation. In Prochlorococcus marinus (strain MIT 9303), this protein is SsrA-binding protein.